Reading from the N-terminus, the 496-residue chain is Probable cytosol aminopeptidase (496 aa).

Mn(2+) is bound by residues Lys251 and Asp256. The active site involves Lys263. Residues Asp274, Asp333, and Glu335 each contribute to the Mn(2+) site. Arg337 is a catalytic residue.

Belongs to the peptidase M17 family. Mn(2+) is required as a cofactor.

It is found in the cytoplasm. The catalysed reaction is Release of an N-terminal amino acid, Xaa-|-Yaa-, in which Xaa is preferably Leu, but may be other amino acids including Pro although not Arg or Lys, and Yaa may be Pro. Amino acid amides and methyl esters are also readily hydrolyzed, but rates on arylamides are exceedingly low.. It catalyses the reaction Release of an N-terminal amino acid, preferentially leucine, but not glutamic or aspartic acids.. Its function is as follows. Presumably involved in the processing and regular turnover of intracellular proteins. Catalyzes the removal of unsubstituted N-terminal amino acids from various peptides. This is Probable cytosol aminopeptidase from Acidovorax sp. (strain JS42).